The primary structure comprises 112 residues: UPF0060 membrane protein AAur_4166 (112 aa).

4 helical membrane-spanning segments follow: residues 8-28, 33-53, 62-82, and 91-111; these read ILFV…WQAV, AWWW…FAAF, VLAA…MLMD, and VIGA…PRPG.

The protein belongs to the UPF0060 family.

It localises to the cell membrane. This chain is UPF0060 membrane protein AAur_4166, found in Paenarthrobacter aurescens (strain TC1).